We begin with the raw amino-acid sequence, 104 residues long: Urease subunit beta (104 aa).

It belongs to the urease beta subunit family. As to quaternary structure, heterotrimer of UreA (gamma), UreB (beta) and UreC (alpha) subunits. Three heterotrimers associate to form the active enzyme.

The protein localises to the cytoplasm. It carries out the reaction urea + 2 H2O + H(+) = hydrogencarbonate + 2 NH4(+). It participates in nitrogen metabolism; urea degradation; CO(2) and NH(3) from urea (urease route): step 1/1. This Rhodopseudomonas palustris (strain BisB5) protein is Urease subunit beta.